The primary structure comprises 327 residues: Acetaldehyde dehydrogenase 6 (327 aa).

15-18 (SGNI) provides a ligand contact to NAD(+). Residue C133 is the Acyl-thioester intermediate of the active site. Residues 164 to 172 (SAGPGTRAN) and N297 contribute to the NAD(+) site.

This sequence belongs to the acetaldehyde dehydrogenase family.

The enzyme catalyses acetaldehyde + NAD(+) + CoA = acetyl-CoA + NADH + H(+). The chain is Acetaldehyde dehydrogenase 6 from Rhodococcus opacus (strain B4).